Consider the following 64-residue polypeptide: Small ribosomal subunit protein bS21 (64 aa).

Belongs to the bacterial ribosomal protein bS21 family.

This chain is Small ribosomal subunit protein bS21, found in Amoebophilus asiaticus (strain 5a2).